We begin with the raw amino-acid sequence, 227 residues long: MICOS complex subunit MIC19 (227 aa).

G2 is lipidated: N-myristoyl glycine. Residue S29 is modified to Phosphoserine. Disordered stretches follow at residues 34-61 and 73-92; these read DRMK…SDEE and EQAK…KELD. The segment covering 39-49 has biased composition (polar residues); it reads SSPSGSKSQRY. Phosphotyrosine is present on Y49. 3 positions are modified to phosphoserine: S50, S56, and S58. K142 bears the N6-acetyllysine mark. The CHCH domain occupies 180 to 222; the sequence is HPVCADLQAKILQCYRENTHQTLKCSALATQYMHCVNHAKQSM. 2 short sequence motifs (cx9C motif) span residues 183–193 and 204–214; these read CADLQAKILQC and CSALATQYMHC. 2 cysteine pairs are disulfide-bonded: C183–C214 and C193–C204.

It belongs to the MICOS complex subunit Mic19 family. Metazoan Mic19 subfamily. Component of the mitochondrial contact site and cristae organizing system (MICOS) complex, composed of at least MICOS10/MIC10, CHCHD3/MIC19, CHCHD6/MIC25, APOOL/MIC27, IMMT/MIC60, APOO/MIC23/MIC26 and MICOS13/MIC13. This complex was also known under the names MINOS or MitOS complex. The MICOS complex associates with mitochondrial outer membrane proteins SAMM50, MTX1 and MTX2 (together described as components of the mitochondrial outer membrane sorting assembly machinery (SAM) complex) and DNAJC11, mitochondrial inner membrane protein TMEM11 and with HSPA9. The MICOS and SAM complexes together with DNAJC11 are part of a large protein complex spanning both membranes termed the mitochondrial intermembrane space bridging (MIB) complex. Interacts with HSPA1A/HSPA1B and OPA1, preferentially with the soluble OPA1 form. Interacts with IMMT/MIC60. In terms of assembly, (Microbial infection) Interacts with human cytomegalovirus protein UL13; this interaction alters cristae architecture. Detected at low levels in brain, placenta, lung, liver, kidney and pancreas with increased levels in heart and skeletal muscle. Higher expression in primary lung cancers than in normal lung tissue.

It is found in the mitochondrion inner membrane. It localises to the cytoplasm. Its subcellular location is the nucleus. The protein localises to the mitochondrion. Component of the MICOS complex, a large protein complex of the mitochondrial inner membrane that plays crucial roles in the maintenance of crista junctions, inner membrane architecture, and formation of contact sites to the outer membrane. Plays an important role in the maintenance of the MICOS complex stability and the mitochondrial cristae morphology. Has also been shown to function as a transcription factor which binds to the BAG1 promoter and represses BAG1 transcription. This is MICOS complex subunit MIC19 (CHCHD3) from Homo sapiens (Human).